Here is a 344-residue protein sequence, read N- to C-terminus: Inositol 2-dehydrogenase/D-chiro-inositol 3-dehydrogenase (344 aa).

This sequence belongs to the Gfo/Idh/MocA family. Homotetramer.

The enzyme catalyses myo-inositol + NAD(+) = scyllo-inosose + NADH + H(+). The catalysed reaction is 1D-chiro-inositol + NAD(+) = scyllo-inosine + NADH + H(+). It functions in the pathway polyol metabolism; myo-inositol degradation into acetyl-CoA; acetyl-CoA from myo-inositol: step 1/7. Involved in the oxidation of myo-inositol (MI) and D-chiro-inositol (DCI) to 2-keto-myo-inositol (2KMI or 2-inosose) and 1-keto-D-chiro-inositol (1KDCI), respectively. The sequence is that of Inositol 2-dehydrogenase/D-chiro-inositol 3-dehydrogenase from Bacillus velezensis (strain DSM 23117 / BGSC 10A6 / LMG 26770 / FZB42) (Bacillus amyloliquefaciens subsp. plantarum).